The following is a 185-amino-acid chain: Hypoxanthine/guanine phosphoribosyltransferase (185 aa).

This sequence belongs to the purine/pyrimidine phosphoribosyltransferase family. Archaeal HPRT subfamily. As to quaternary structure, homodimer.

The protein localises to the cytoplasm. It catalyses the reaction IMP + diphosphate = hypoxanthine + 5-phospho-alpha-D-ribose 1-diphosphate. The enzyme catalyses GMP + diphosphate = guanine + 5-phospho-alpha-D-ribose 1-diphosphate. It participates in purine metabolism; IMP biosynthesis via salvage pathway; IMP from hypoxanthine: step 1/1. Catalyzes a salvage reaction resulting in the formation of IMP that is energically less costly than de novo synthesis. This is Hypoxanthine/guanine phosphoribosyltransferase from Methanococcus maripaludis (strain C7 / ATCC BAA-1331).